The following is a 158-amino-acid chain: Dihydroneopterin triphosphate diphosphatase (158 aa).

Substrate contacts are provided by Lys14, Arg36, and Thr47. Residues 14 to 153 (KNNQSVLVVI…NNAEAIKKYL (140 aa)) form the Nudix hydrolase domain. The Nudix box signature appears at 48–69 (GTIESDETPKKTAIRELWEEVR). Mg(2+) is bound by residues Glu63 and Glu67. 88 to 91 (FEIF) provides a ligand contact to substrate. Glu124 contacts Mg(2+). Residue Ser142 coordinates substrate.

It belongs to the Nudix hydrolase family. It depends on Mg(2+) as a cofactor.

The catalysed reaction is 7,8-dihydroneopterin 3'-triphosphate + H2O = 7,8-dihydroneopterin 3'-phosphate + diphosphate + H(+). Catalyzes the hydrolysis of dihydroneopterin triphosphate to dihydroneopterin monophosphate and pyrophosphate. Required for efficient folate biosynthesis. Can also hydrolyze nucleoside triphosphates with a preference for dATP. In Haemophilus influenzae (strain ATCC 51907 / DSM 11121 / KW20 / Rd), this protein is Dihydroneopterin triphosphate diphosphatase (nudB).